Here is a 296-residue protein sequence, read N- to C-terminus: Polyadenylate-binding protein 2 (296 aa).

A disordered region spans residues 1-102 (MAAVSSAASL…EEEPGELTGD (102 aa)). Gly residues-rich tracts occupy residues 19 to 31 (LRGG…GGQD) and 71 to 82 (GRGGSGGGGAGG). Acidic residues predominate over residues 84-97 (EELEDEELEEEEPG). A coiled-coil region spans residues 107–141 (DPELEAIKARVREMEEEAEKLKELQNEVEKQMNMS). The interval 146–296 (NAGPVIMSIE…ARVTSWYTPY (151 aa)) is necessary for homooligomerization. The RRM domain maps to 163–240 (RSIYVGNVDY…RQIKVVPKRT (78 aa)).

In terms of assembly, monomer and homooligomer. Binds RNA as a monomer and oligomerizes when bound to poly(A).

The protein localises to the nucleus. The protein resides in the cytoplasm. Functionally, involved in the 3'-end formation of mRNA precursors (pre-mRNA) by the addition of a poly(A) tail of 200-250 nt to the upstream cleavage product. Stimulates poly(A) polymerase (PAPOLA) conferring processivity on the poly(A) tail elongation reaction and also controls the poly(A) tail length. Increases the affinity of poly(A) polymerase for RNA. Binds to poly(A) and to poly(G) with high affinity. May protect the poly(A) tail from degradation. The chain is Polyadenylate-binding protein 2 from Xenopus tropicalis (Western clawed frog).